The following is a 351-amino-acid chain: Glycerol-1-phosphate dehydrogenase [NAD(P)+] (351 aa).

Residues 97–101 (GKVID) and 119–122 (TSPS) each bind NAD(+). Residue Asp124 participates in substrate binding. Ser128 is a binding site for NAD(+). Position 171 (Asp171) interacts with substrate. 2 residues coordinate Zn(2+): Asp171 and His251. Substrate is bound at residue His255. His267 provides a ligand contact to Zn(2+).

This sequence belongs to the glycerol-1-phosphate dehydrogenase family. As to quaternary structure, homodimer. Zn(2+) serves as cofactor.

The protein localises to the cytoplasm. It catalyses the reaction sn-glycerol 1-phosphate + NAD(+) = dihydroxyacetone phosphate + NADH + H(+). The catalysed reaction is sn-glycerol 1-phosphate + NADP(+) = dihydroxyacetone phosphate + NADPH + H(+). It functions in the pathway membrane lipid metabolism; glycerophospholipid metabolism. In terms of biological role, catalyzes the NAD(P)H-dependent reduction of dihydroxyacetonephosphate (DHAP or glycerone phosphate) to glycerol 1-phosphate (G1P). The G1P thus generated is used as the glycerophosphate backbone of phospholipids in the cellular membranes of Archaea. In Saccharolobus islandicus (strain M.16.27) (Sulfolobus islandicus), this protein is Glycerol-1-phosphate dehydrogenase [NAD(P)+].